The chain runs to 354 residues: DNA polymerase IV (354 aa).

Positions 6–187 constitute a UmuC domain; it reads IIHVDCDCFY…LPVARLHGVG (182 aa). D10 and D105 together coordinate Mg(2+). E106 is an active-site residue.

It belongs to the DNA polymerase type-Y family. Monomer. The cofactor is Mg(2+).

Its subcellular location is the cytoplasm. It catalyses the reaction DNA(n) + a 2'-deoxyribonucleoside 5'-triphosphate = DNA(n+1) + diphosphate. Poorly processive, error-prone DNA polymerase involved in untargeted mutagenesis. Copies undamaged DNA at stalled replication forks, which arise in vivo from mismatched or misaligned primer ends. These misaligned primers can be extended by PolIV. Exhibits no 3'-5' exonuclease (proofreading) activity. May be involved in translesional synthesis, in conjunction with the beta clamp from PolIII. This chain is DNA polymerase IV, found in Pseudomonas putida (strain ATCC 700007 / DSM 6899 / JCM 31910 / BCRC 17059 / LMG 24140 / F1).